A 55-amino-acid polypeptide reads, in one-letter code: Large ribosomal subunit protein bL33B (55 aa).

It belongs to the bacterial ribosomal protein bL33 family.

This Mycobacterium tuberculosis (strain CDC 1551 / Oshkosh) protein is Large ribosomal subunit protein bL33B (rpmG2).